The primary structure comprises 336 residues: DNA repair protein XRCC4 (336 aa).

Positions 1–213 (MERKISRIHL…EREKDIKQEG (213 aa)) are interaction with IFFO1. Position 53 is a phosphoserine; by PRKDC (S53). Coiled coils occupy residues 131–165 (LDTIAENQAKNEHLQKENERLLRDWNDVQGRFEKC) and 184–212 (LNEKKTKIRSLHNKLLNAAQEREKDIKQE). An interaction with LIG4 region spans residues 180–213 (FILVLNEKKTKIRSLHNKLLNAAQEREKDIKQEG). S193 is subject to Phosphoserine; by PRKDC. K210 participates in a covalent cross-link: Glycyl lysine isopeptide (Lys-Gly) (interchain with G-Cter in SUMO). Residues 212–249 (EGETAICSEMTADRDPVYDESTDEESENQTDLSGLASA) are disordered. The residue at position 229 (Y229) is a Phosphotyrosine. A compositionally biased stretch (acidic residues) spans 229 to 239 (YDESTDEESEN). S232 carries the phosphoserine modification. T233 is modified (phosphothreonine; by CK2). 2 positions are modified to phosphoserine: S237 and S256. Phosphoserine; by PRKDC is present on S260. The tract at residues 264-336 (TDIAPSRKRR…SSPEDLFDEI (73 aa)) is disordered. The Nuclear localization signal signature appears at 270–275 (RKRRQR). Residue K296 forms a Glycyl lysine isopeptide (Lys-Gly) (interchain with G-Cter in ubiquitin) linkage. S303, S304, S315, and S320 each carry phosphoserine; by PRKDC. Polar residues predominate over residues 317 to 329 (ENMSLETLRNSSP). Residue T323 is modified to Phosphothreonine; by PRKDC. 2 positions are modified to phosphoserine; by PRKDC: S327 and S328.

This sequence belongs to the XRCC4-XLF family. XRCC4 subfamily. Homodimer and homotetramer in solution. Interacts with NHEJ1/XLF; the interaction is direct and is mediated via a head-to-head interaction between N-terminal head regions. Interacts with LIG4; the LIG4-XRCC4 subcomplex has a 1:2 stoichiometry and XRCC4 is required for LIG4 stability. Component of the core long-range non-homologous end joining (NHEJ) complex (also named DNA-PK complex) composed of PRKDC, LIG4, XRCC4, XRCC6/Ku70, XRCC5/Ku86 and NHEJ1/XLF. Additional component of the NHEJ complex includes PAXX. Following autophosphorylation, PRKDC dissociates from DNA, leading to formation of the short-range NHEJ complex, composed of LIG4, XRCC4, XRCC6/Ku70, XRCC5/Ku86 and NHEJ1/XLF. Interacts with PRKDC; the interaction is direct. Interacts with XRCC6/Ku70; the interaction is direct. Interacts with APTX and APLF. Forms a heterotetramer with IFFO1; the interaction involves LIG4-free XRCC4 and leads to the relocalization of IFFO1 to the sites of DNA damage. Interacts with PNKP; mainly interacts with PNKP when phosphorylated at Thr-233, but is also able to interact at much lower level with PNKP when not unphosphorylated. Interacts with POLL (DNA polymerase lambda). In terms of assembly, interacts with XKR4; interacts with the processed form of XKR4, which is cleaved by caspase. In terms of processing, phosphorylated by PRKDC at the C-terminus in response to DNA damage; Ser-260 and Ser-320 constitute the main phosphorylation sites. Phosphorylations by PRKDC at the C-terminus of XRCC4 and NHEJ1/XLF are highly redundant and regulate ability of the XRCC4-NHEJ1/XLF subcomplex to bridge DNA. Phosphorylation by PRKDC does not prevent interaction with NHEJ1/XLF but disrupts ability to bridge DNA and promotes detachment from DNA. Phosphorylation at Ser-327 and Ser-328 by PRKDC promotes recognition by the SCF(FBXW7) complex and subsequent ubiquitination via 'Lys-63'-linked ubiquitin. Phosphorylation at Thr-233 by CK2 promotes interaction with PNKP; regulating PNKP activity and localization to DNA damage sites. Phosphorylation by CK2 promotes interaction with APTX. Post-translationally, ubiquitinated at Lys-296 by the SCF(FBXW7) complex via 'Lys-63'-linked ubiquitination, thereby promoting double-strand break repair: the SCF(FBXW7) complex specifically recognizes XRCC4 when phosphorylated at Ser-327 and Ser-328 by PRKDC, and 'Lys-63'-linked ubiquitination facilitates DNA non-homologous end joining (NHEJ) by enhancing association with XRCC5/Ku80 and XRCC6/Ku70. Monoubiquitinated. Undergoes proteolytic processing by caspase-3 (CASP3). This generates the protein XRCC4, C-terminus (XRCC4/C), which translocates to the cytoplasm and activates phospholipid scramblase activity of XKR4, thereby promoting phosphatidylserine exposure on apoptotic cell surface. Widely expressed.

The protein localises to the nucleus. It is found in the chromosome. It localises to the cytoplasm. DNA non-homologous end joining (NHEJ) core factor, required for double-strand break repair and V(D)J recombination. Acts as a scaffold protein that regulates recruitment of other proteins to DNA double-strand breaks (DSBs). Associates with NHEJ1/XLF to form alternating helical filaments that bridge DNA and act like a bandage, holding together the broken DNA until it is repaired. The XRCC4-NHEJ1/XLF subcomplex binds to the DNA fragments of a DSB in a highly diffusive manner and robustly bridges two independent DNA molecules, holding the broken DNA fragments in close proximity to one other. The mobility of the bridges ensures that the ends remain accessible for further processing by other repair factors. Plays a key role in the NHEJ ligation step of the broken DNA during DSB repair via direct interaction with DNA ligase IV (LIG4): the LIG4-XRCC4 subcomplex reseals the DNA breaks after the gap filling is completed. XRCC4 stabilizes LIG4, regulates its subcellular localization and enhances LIG4's joining activity. Binding of the LIG4-XRCC4 subcomplex to DNA ends is dependent on the assembly of the DNA-dependent protein kinase complex DNA-PK to these DNA ends. Promotes displacement of PNKP from processed strand break termini. In terms of biological role, acts as an activator of the phospholipid scramblase activity of XKR4. This form, which is generated upon caspase-3 (CASP3) cleavage, translocates into the cytoplasm and interacts with XKR4, thereby promoting phosphatidylserine scramblase activity of XKR4 and leading to phosphatidylserine exposure on apoptotic cell surface. The protein is DNA repair protein XRCC4 of Homo sapiens (Human).